The primary structure comprises 194 residues: Potassium-transporting ATPase KdpC subunit (194 aa).

The helical transmembrane segment at 12–34 threads the bilayer; sequence LFLLLLTGGVYPLLTTALGQWWF.

This sequence belongs to the KdpC family. As to quaternary structure, the system is composed of three essential subunits: KdpA, KdpB and KdpC.

The protein resides in the cell inner membrane. In terms of biological role, part of the high-affinity ATP-driven potassium transport (or Kdp) system, which catalyzes the hydrolysis of ATP coupled with the electrogenic transport of potassium into the cytoplasm. This subunit acts as a catalytic chaperone that increases the ATP-binding affinity of the ATP-hydrolyzing subunit KdpB by the formation of a transient KdpB/KdpC/ATP ternary complex. The sequence is that of Potassium-transporting ATPase KdpC subunit from Salmonella heidelberg (strain SL476).